The chain runs to 392 residues: Na(+)/H(+) antiporter NhaA (392 aa).

11 helical membrane passes run 17–37 (ILLI…LSAL), 59–79 (LILW…GLEV), 95–115 (IFPA…YLFF), 125–145 (GWAI…ALLG), 154–174 (VFLL…IALF), 179–199 (VALV…ILNW), 213–233 (FILW…GVIV), 254–274 (VLHP…NAGV), 290–310 (VGIA…FSWV), 328–348 (IFAV…IAGL), and 363–383 (LGIL…LNSV).

It belongs to the NhaA Na(+)/H(+) (TC 2.A.33) antiporter family.

It localises to the cell inner membrane. The enzyme catalyses Na(+)(in) + 2 H(+)(out) = Na(+)(out) + 2 H(+)(in). In terms of biological role, na(+)/H(+) antiporter that extrudes sodium in exchange for external protons. The sequence is that of Na(+)/H(+) antiporter NhaA from Proteus mirabilis (strain HI4320).